The following is a 152-amino-acid chain: 3-hydroxyacyl-[acyl-carrier-protein] dehydratase FabZ (152 aa).

Residue His58 is part of the active site.

Belongs to the thioester dehydratase family. FabZ subfamily.

It is found in the cytoplasm. It catalyses the reaction a (3R)-hydroxyacyl-[ACP] = a (2E)-enoyl-[ACP] + H2O. Involved in unsaturated fatty acids biosynthesis. Catalyzes the dehydration of short chain beta-hydroxyacyl-ACPs and long chain saturated and unsaturated beta-hydroxyacyl-ACPs. In Prochlorococcus marinus subsp. pastoris (strain CCMP1986 / NIES-2087 / MED4), this protein is 3-hydroxyacyl-[acyl-carrier-protein] dehydratase FabZ.